The sequence spans 871 residues: Protein translocase subunit SecA (871 aa).

Residues Gln-80, 98–102 (GEGKT), and Asp-537 contribute to the ATP site.

This sequence belongs to the SecA family. Monomer and homodimer. Part of the essential Sec protein translocation apparatus which comprises SecA, SecYEG and auxiliary proteins SecDF. Other proteins may also be involved. A single SecA monomer interacts with SecY in the channel.

The protein localises to the cell inner membrane. It is found in the cytoplasm. It carries out the reaction ATP + H2O + cellular proteinSide 1 = ADP + phosphate + cellular proteinSide 2.. Part of the Sec protein translocase complex. Interacts with the SecYEG preprotein conducting channel. Has a central role in coupling the hydrolysis of ATP to the transfer of proteins into and across the cell membrane, serving as an ATP-driven molecular motor driving the stepwise translocation of polypeptide chains across the membrane. This is Protein translocase subunit SecA from Thermotoga maritima (strain ATCC 43589 / DSM 3109 / JCM 10099 / NBRC 100826 / MSB8).